Here is a 59-residue protein sequence, read N- to C-terminus: Protein translocase subunit SecE (59 aa).

A helical membrane pass occupies residues 30–50 (ITVITTVIFFAIFFALIDSGI).

The protein belongs to the SecE/SEC61-gamma family. Component of the Sec protein translocase complex. Heterotrimer consisting of SecY, SecE and SecG subunits. The heterotrimers can form oligomers, although 1 heterotrimer is thought to be able to translocate proteins. Interacts with the ribosome. Interacts with SecDF, and other proteins may be involved. Interacts with SecA.

It localises to the cell membrane. Its function is as follows. Essential subunit of the Sec protein translocation channel SecYEG. Clamps together the 2 halves of SecY. May contact the channel plug during translocation. The protein is Protein translocase subunit SecE of Bacillus licheniformis.